The following is a 217-amino-acid chain: MKPLSPLTLSFFLFVFITNLSLAFSNEDVEQVLDFNGNPIFPGVQYFILPAIRGPAGGGVRLGRTGDLTCPVTVLQDRQEVKNGLPVKFVIPEISPGIIFTGTPIEIEYTKKPNCAKSSKWLVFVDNVIQKACVGIGGPENYPGVQTLSGLFKIEKHESGFGYKLGFCVKGSPTCLDVGRFDNDEDGRRLNLTEHESFQVVFIQAEANDAEFIKSVV.

Positions 1–26 (MKPLSPLTLSFFLFVFITNLSLAFSN) are cleaved as a signal peptide. 2 disulfide bridges follow: C70/C115 and C168/C175. N191 is a glycosylation site (N-linked (GlcNAc...) asparagine).

This sequence belongs to the protease inhibitor I3 (leguminous Kunitz-type inhibitor) family. Expressed in roots, leaves, epidermal layers of elongating stems, meristems and in the vascular system.

It localises to the secreted. Might act as a protease inhibitor involved in plant defense responses. The sequence is that of Kunitz-type trypsin inhibitor-like 1 protein (PIP20-1) from Pisum sativum (Garden pea).